Here is a 239-residue protein sequence, read N- to C-terminus: Large ribosomal subunit protein uL2 (239 aa).

Residues 200–239 (VNHPHGGKEHHIGRPSTVSRRAPPGRKVGHIAARRTGRRK) are disordered. Positions 222–239 (PPGRKVGHIAARRTGRRK) are enriched in basic residues.

This sequence belongs to the universal ribosomal protein uL2 family. Part of the 50S ribosomal subunit. Forms a bridge to the 30S subunit in the 70S ribosome.

One of the primary rRNA binding proteins. Required for association of the 30S and 50S subunits to form the 70S ribosome, for tRNA binding and peptide bond formation. It has been suggested to have peptidyltransferase activity; this is somewhat controversial. Makes several contacts with the 16S rRNA in the 70S ribosome. The chain is Large ribosomal subunit protein uL2 from Thermococcus kodakarensis (strain ATCC BAA-918 / JCM 12380 / KOD1) (Pyrococcus kodakaraensis (strain KOD1)).